The chain runs to 310 residues: MSSKLLTIQLLEELVHAAELNQEGKTADYIPELANVNQELTAIAVQALGEKTLAYSNNPLHPVTLQSTGKMIPLIGLLEEFGADQLFEWVKVEPSGDDFASITRLEQFGPKPSNPMLNAGAIALCSRIPGIGEQQFRWLEHWVQKLFNQRLSINPLVFASEKRTGNRNRALAYLLKSRNNLGADVHETLDLYFALCSYEAMLDQMLYLPTLLANRGKDPDTGEQILSTETCKITLAIMATCGLYDETGTHMVKTGMPAKSGVSGYTIAVVPGKAGIVVLSPRVNAKGNSIRGEIMLEGLSKAMNWHFALP.

Serine 67, asparagine 118, glutamate 161, asparagine 168, tyrosine 192, tyrosine 244, and valine 262 together coordinate substrate.

This sequence belongs to the glutaminase family. Homotetramer.

The enzyme catalyses L-glutamine + H2O = L-glutamate + NH4(+). This Legionella pneumophila subsp. pneumophila (strain Philadelphia 1 / ATCC 33152 / DSM 7513) protein is Glutaminase.